The chain runs to 33 residues: Cytochrome b6-f complex subunit 6 (33 aa).

A helical membrane pass occupies residues 4 to 24; it reads ITIISYFGLLLASIIFTLVLF.

Belongs to the PetL family. In terms of assembly, the 4 large subunits of the cytochrome b6-f complex are cytochrome b6, subunit IV (17 kDa polypeptide, PetD), cytochrome f and the Rieske protein, while the 4 small subunits are PetG, PetL, PetM and PetN. The complex functions as a dimer.

The protein localises to the plastid. It localises to the chloroplast thylakoid membrane. Its function is as follows. Component of the cytochrome b6-f complex, which mediates electron transfer between photosystem II (PSII) and photosystem I (PSI), cyclic electron flow around PSI, and state transitions. PetL is important for photoautotrophic growth as well as for electron transfer efficiency and stability of the cytochrome b6-f complex. This chain is Cytochrome b6-f complex subunit 6, found in Pinus mugo (Dwarf mountain pine).